Consider the following 131-residue polypeptide: D-ribose pyranase (131 aa).

Catalysis depends on His20, which acts as the Proton donor. Residues Asp28, His98, and 120-122 contribute to the substrate site; that span reads YAN.

This sequence belongs to the RbsD / FucU family. RbsD subfamily. Homodecamer.

The protein localises to the cytoplasm. The enzyme catalyses beta-D-ribopyranose = beta-D-ribofuranose. The protein operates within carbohydrate metabolism; D-ribose degradation; D-ribose 5-phosphate from beta-D-ribopyranose: step 1/2. Functionally, catalyzes the interconversion of beta-pyran and beta-furan forms of D-ribose. The sequence is that of D-ribose pyranase from Clostridium botulinum (strain Eklund 17B / Type B).